Consider the following 427-residue polypeptide: Glutamate-1-semialdehyde 2,1-aminomutase (427 aa).

Lys265 is subject to N6-(pyridoxal phosphate)lysine.

Belongs to the class-III pyridoxal-phosphate-dependent aminotransferase family. HemL subfamily. As to quaternary structure, homodimer. Pyridoxal 5'-phosphate serves as cofactor.

It is found in the cytoplasm. The enzyme catalyses (S)-4-amino-5-oxopentanoate = 5-aminolevulinate. It functions in the pathway porphyrin-containing compound metabolism; protoporphyrin-IX biosynthesis; 5-aminolevulinate from L-glutamyl-tRNA(Glu): step 2/2. The polypeptide is Glutamate-1-semialdehyde 2,1-aminomutase (Burkholderia pseudomallei (strain 668)).